We begin with the raw amino-acid sequence, 155 residues long: MECPNCHQNASRVIDSRPSDENRAIRRRRECENCGFRFTTFERIETAPLLVIKNDGTREPFNRKKILHGVMAAGQKRPISSDQFEQLVDHVENKVRKQGISEISSKKIGQYVMDELADLDDVAYIRFASIYREFKDMSSFMKTMEDMMAKKGKGN.

Positions 1 to 11 (MECPNCHQNAS) are enriched in polar residues. The interval 1–22 (MECPNCHQNASRVIDSRPSDEN) is disordered. A zinc finger spans residues 3 to 34 (CPNCHQNASRVIDSRPSDENRAIRRRRECENC). The ATP-cone domain occupies 49–139 (LLVIKNDGTR…IYREFKDMSS (91 aa)).

It belongs to the NrdR family. Requires Zn(2+) as cofactor.

In terms of biological role, negatively regulates transcription of bacterial ribonucleotide reductase nrd genes and operons by binding to NrdR-boxes. This chain is Transcriptional repressor NrdR, found in Lactobacillus helveticus (strain DPC 4571).